The following is a 269-amino-acid chain: tRNA pseudouridine synthase A (269 aa).

Catalysis depends on D51, which acts as the Nucleophile. Residue Y109 participates in substrate binding.

It belongs to the tRNA pseudouridine synthase TruA family. In terms of assembly, homodimer.

The enzyme catalyses uridine(38/39/40) in tRNA = pseudouridine(38/39/40) in tRNA. Its function is as follows. Formation of pseudouridine at positions 38, 39 and 40 in the anticodon stem and loop of transfer RNAs. The sequence is that of tRNA pseudouridine synthase A from Aeromonas hydrophila subsp. hydrophila (strain ATCC 7966 / DSM 30187 / BCRC 13018 / CCUG 14551 / JCM 1027 / KCTC 2358 / NCIMB 9240 / NCTC 8049).